Consider the following 312-residue polypeptide: MEPGSVENLSIVYRSRDFLVVNKHWDVRIDSKAWRETLTLQKQLRYRFPELADPDTCYGFRFCHQLDFSTSGALCVALNKAAAGSAYRCFKERRVTKAYLALLRGHIQESRVTISHAIGRNSTEGRAHTMCIEGSQGCENPKPSLTDLVVLEHGLYAGDPVSKVLLKPLTGRTHQLRVHCSALGHPVVGDLTYGEVSGREDRPFRMMLHAFYLRIPTDTECVEVCTPDPFLPSLDACWSPHTLLQSLDQLVQALRATPDPDPEDRGPRPGSPSALLPGPGRPPPPPTKPPETEAQRGPCLQWLSEWTLEPDS.

At methionine 1 the chain carries N-acetylmethionine. Aspartate 67 is a catalytic residue. The tract at residues 256 to 298 (ATPDPDPEDRGPRPGSPSALLPGPGRPPPPPTKPPETEAQRGP) is disordered. Positions 279-289 (PGRPPPPPTKP) are enriched in pro residues.

It belongs to the pseudouridine synthase RluA family.

The sequence is that of RNA pseudouridylate synthase domain-containing protein 1 (RPUSD1) from Homo sapiens (Human).